A 427-amino-acid chain; its full sequence is Enolase (427 aa).

Gln-163 provides a ligand contact to (2R)-2-phosphoglycerate. The active-site Proton donor is Glu-205. The Mg(2+) site is built by Asp-242, Glu-285, and Asp-312. Residues Lys-337, Arg-366, Ser-367, and Lys-388 each coordinate (2R)-2-phosphoglycerate. The active-site Proton acceptor is the Lys-337.

The protein belongs to the enolase family. Mg(2+) serves as cofactor.

The protein resides in the cytoplasm. The protein localises to the secreted. It is found in the cell surface. The enzyme catalyses (2R)-2-phosphoglycerate = phosphoenolpyruvate + H2O. Its pathway is carbohydrate degradation; glycolysis; pyruvate from D-glyceraldehyde 3-phosphate: step 4/5. Its function is as follows. Catalyzes the reversible conversion of 2-phosphoglycerate (2-PG) into phosphoenolpyruvate (PEP). It is essential for the degradation of carbohydrates via glycolysis. The chain is Enolase from Burkholderia multivorans (strain ATCC 17616 / 249).